We begin with the raw amino-acid sequence, 115 residues long: MNLALALMINTLLALLLMTITFWLPQLNTYMEKTNPYECGFDPLSPARIPFSMKFFLVAITFLLFDLEIALLLPLPWALQTTNPSLTIASSLTLITILILSLAYEWSQKGLDWVE.

The next 3 membrane-spanning stretches (helical) occupy residues L3 to W23, F55 to L75, and L86 to W106.

It belongs to the complex I subunit 3 family. As to quaternary structure, core subunit of respiratory chain NADH dehydrogenase (Complex I) which is composed of 45 different subunits. Interacts with TMEM186. Interacts with TMEM242.

The protein resides in the mitochondrion inner membrane. The catalysed reaction is a ubiquinone + NADH + 5 H(+)(in) = a ubiquinol + NAD(+) + 4 H(+)(out). Core subunit of the mitochondrial membrane respiratory chain NADH dehydrogenase (Complex I) which catalyzes electron transfer from NADH through the respiratory chain, using ubiquinone as an electron acceptor. Essential for the catalytic activity of complex I. The protein is NADH-ubiquinone oxidoreductase chain 3 of Hylobates lar (Lar gibbon).